The following is a 352-amino-acid chain: Popeye domain-containing protein 1 (352 aa).

The Extracellular segment spans residues 1 to 38 (MSNTTSALPSSVPAVSLDPNATLCQDWEQSHHLLFHLA). N-linked (GlcNAc...) asparagine glycosylation is found at N3 and N20. Residues 39 to 59 (NLSLGLGFLIPTTLALHMIFL) form a helical membrane-spanning segment. A topological domain (cytoplasmic) is located at residue R60. The helical transmembrane segment at 61–81 (LLLMTGCSLFIAWATLYRCTL) threads the bilayer. A topological domain (extracellular) is located at residue D82. A helical transmembrane segment spans residues 83–103 (VMVWNVVFLLVNFMHFFFLLY). At 104-352 (KRRPIKIDRE…NVSKTTKKDI (249 aa)) the chain is on the cytoplasmic side. The disordered stretch occupies residues 299 to 352 (ILRGGSTGSSLQKNPLTKTSTTMKPIEEGLEDDVFESESPTTSQNVSKTTKKDI). Polar residues-rich tracts occupy residues 306-321 (GSSLQKNPLTKTSTTM) and 336-346 (ESPTTSQNVSK).

Belongs to the popeye family. Expressed in skeletal muscle (at protein level).

The protein resides in the lateral cell membrane. Its subcellular location is the cell junction. It localises to the tight junction. The protein localises to the membrane. It is found in the cell membrane. The protein resides in the sarcolemma. Its subcellular location is the caveola. Its function is as follows. Cell adhesion molecule involved in the establishment and/or maintenance of cell integrity. Involved in skeletal muscle and heart development as well as in the maintenance of heart function. May play a role in vamp3-mediated vesicular transport and recycling of receptor molecules. Involved in the formation and regulation of the tight junction (TJ) paracellular permeability barrier in epithelial cells. May induce primordial adhesive contact and aggregation of epithelial cells in a Ca(2+)-independent manner. May be involved in epithelial movement during corneal sheet formation and regeneration. May play a role in the regulation of cell shape and movement by modulating the Rho-GTPase activity. May also be involved in striated muscle regeneration and in the regulation of cell spreading. In Danio rerio (Zebrafish), this protein is Popeye domain-containing protein 1 (popdc1).